Consider the following 89-residue polypeptide: Small ribosomal subunit protein uS15 (89 aa).

The protein belongs to the universal ribosomal protein uS15 family. As to quaternary structure, part of the 30S ribosomal subunit. Forms a bridge to the 50S subunit in the 70S ribosome, contacting the 23S rRNA.

Its function is as follows. One of the primary rRNA binding proteins, it binds directly to 16S rRNA where it helps nucleate assembly of the platform of the 30S subunit by binding and bridging several RNA helices of the 16S rRNA. Functionally, forms an intersubunit bridge (bridge B4) with the 23S rRNA of the 50S subunit in the ribosome. This chain is Small ribosomal subunit protein uS15, found in Prochlorococcus marinus subsp. pastoris (strain CCMP1986 / NIES-2087 / MED4).